The primary structure comprises 342 residues: Heat-inducible transcription repressor HrcA (342 aa).

It belongs to the HrcA family.

In terms of biological role, negative regulator of class I heat shock genes (grpE-dnaK-dnaJ and groELS operons). Prevents heat-shock induction of these operons. This chain is Heat-inducible transcription repressor HrcA, found in Leptospira borgpetersenii serovar Hardjo-bovis (strain JB197).